Consider the following 214-residue polypeptide: 7-cyano-7-deazaguanine synthase (214 aa).

An ATP-binding site is contributed by 10-20 (FSGGQDSTTCL). Residues cysteine 184, cysteine 193, cysteine 196, and cysteine 199 each contribute to the Zn(2+) site.

Belongs to the QueC family. Homodimer. Requires Zn(2+) as cofactor.

It carries out the reaction 7-carboxy-7-deazaguanine + NH4(+) + ATP = 7-cyano-7-deazaguanine + ADP + phosphate + H2O + H(+). Its pathway is purine metabolism; 7-cyano-7-deazaguanine biosynthesis. Functionally, catalyzes the ATP-dependent conversion of 7-carboxy-7-deazaguanine (CDG) to 7-cyano-7-deazaguanine (preQ(0)). The chain is 7-cyano-7-deazaguanine synthase from Exiguobacterium sp. (strain ATCC BAA-1283 / AT1b).